A 463-amino-acid chain; its full sequence is MDATPELKLYNTLTREKSVFSPIDPNNVRMYVCGPTVYDFAHIGNARPVIVFDVLFRLLRYVYGEDHVTYARNITDVDDKINARALRDHPGLPLNDAIRAVTEKTETQFHADVAELGCLEPNFEPRATDNIVEMTEIIEKLIGNGHAYVASGEVLFDTKSMADYGQLSKRPLDEQQAGARIAVDAHKKNPGDFVLWKLSSHNEPGWESPWGRGRPGWHIECSAMSKRYLGDVFDIHGGGLDLIFPHHENEIAQSRCAHGTEVMANVWMHNGFLQVEGRKMSKSEGNFVTIHELLQTETFGGRKWPGQVLRLAMLMTHYREPIDFSIKRLEEAERLLAKWPAAEASDAAPDESVLNALSDDLNTVAAVQALHALAQAAHGDPTARAVFAATADLLGLLPKKMEIDEAVASAVDALVAMRLEMLKAKNFTEADKIRDELTAKGIQLKDGKDAVTGERVTTWEVKR.

Cysteine 33 contributes to the Zn(2+) binding site. The short motif at 35–45 (PTVYDFAHIGN) is the 'HIGH' region element. Residues cysteine 221, histidine 246, and glutamate 250 each coordinate Zn(2+). Positions 279–283 (KMSKS) match the 'KMSKS' region motif. Residue lysine 282 coordinates ATP.

It belongs to the class-I aminoacyl-tRNA synthetase family. As to quaternary structure, monomer. Requires Zn(2+) as cofactor.

It is found in the cytoplasm. It carries out the reaction tRNA(Cys) + L-cysteine + ATP = L-cysteinyl-tRNA(Cys) + AMP + diphosphate. The sequence is that of Cysteine--tRNA ligase from Rhizobium johnstonii (strain DSM 114642 / LMG 32736 / 3841) (Rhizobium leguminosarum bv. viciae).